Consider the following 440-residue polypeptide: ATP-dependent protease ATPase subunit HslU (440 aa).

Residues I18 and G60 to E65 contribute to the ATP site. Positions R138–L159 are disordered. Residues D252, E318, and R390 each coordinate ATP.

This sequence belongs to the ClpX chaperone family. HslU subfamily. In terms of assembly, a double ring-shaped homohexamer of HslV is capped on each side by a ring-shaped HslU homohexamer. The assembly of the HslU/HslV complex is dependent on binding of ATP.

Its subcellular location is the cytoplasm. In terms of biological role, ATPase subunit of a proteasome-like degradation complex; this subunit has chaperone activity. The binding of ATP and its subsequent hydrolysis by HslU are essential for unfolding of protein substrates subsequently hydrolyzed by HslV. HslU recognizes the N-terminal part of its protein substrates and unfolds these before they are guided to HslV for hydrolysis. The protein is ATP-dependent protease ATPase subunit HslU of Alkalilimnicola ehrlichii (strain ATCC BAA-1101 / DSM 17681 / MLHE-1).